The chain runs to 382 residues: Methylthioribose-1-phosphate isomerase (382 aa).

The active-site Proton donor is Asp257.

The protein belongs to the eIF-2B alpha/beta/delta subunits family. MtnA subfamily.

Its subcellular location is the cytoplasm. The protein resides in the nucleus. The enzyme catalyses 5-(methylsulfanyl)-alpha-D-ribose 1-phosphate = 5-(methylsulfanyl)-D-ribulose 1-phosphate. Its pathway is amino-acid biosynthesis; L-methionine biosynthesis via salvage pathway; L-methionine from S-methyl-5-thio-alpha-D-ribose 1-phosphate: step 1/6. Functionally, catalyzes the interconversion of methylthioribose-1-phosphate (MTR-1-P) into methylthioribulose-1-phosphate (MTRu-1-P). The chain is Methylthioribose-1-phosphate isomerase from Paracoccidioides brasiliensis (strain Pb18).